An 89-amino-acid chain; its full sequence is HssA/B-like protein 21 (89 aa).

This sequence belongs to the hssA/B family.

The polypeptide is HssA/B-like protein 21 (hssl21) (Dictyostelium discoideum (Social amoeba)).